Reading from the N-terminus, the 317-residue chain is MPFTIDTARSIFPETLAADVVPATIARFKQLSAEDQLALIWFAYLEMGKTITIAAPGAANMQFAENTLQEIRQMTPLQQTQAMCDLANRTDTPICRTYASWSPNIKLGFWYELGRFMDQGLVAPIPEGYKLSANANAILVTIQGIDPGQQITVLRNCVVDMGFDTSKLGSYQRVAEPVVPPQEMSQRTKVQIEGVTNSTVLQYMDNLNANDFDNLISLFAEDGALQPPFQKPIVGKENTLRFFREECQNLKLIPERGVSEPTEDGYTQIKVTGKVQTPWFGGNVGMNIAWRFLLNPENKVFFVAIDLLASPKELLNL.

The region spanning 18 to 169 is the OCP N-terminal domain; sequence ADVVPATIAR…DMGFDTSKLG (152 aa). The 3'-hydroxyechinenone site is built by Leu-37, Tyr-203, and Trp-290.

Belongs to the orange carotenoid-binding protein family. Homodimer. Requires 3'-hydroxyechinenone as cofactor. Post-translationally, proteolytically cleaved into a red 16.7 kDa form named red carotenoid-binding protein (RCP) which lacks 15 residues from the N-terminus and approximately 150 residues from the C-terminus.

It localises to the cellular thylakoid membrane. Its function is as follows. Acts as a blue-light photoreceptor and photo-protectant. Essential for inhibiting damaged induced by excess blue-green light via a process known as non-photochemical quenching (NPQ). Binding carotenoids improves OCP's intrinsic photoprotectant activity by broadening its absorption spectrum and facilitating the dissipation of absorbed energy. In the dark or dim light the stable inactive form (OCP-O) is orange, upon illumination with blue-green light it converts to a metastable active red form (OCP-R), inducing energy dissipation, quenching cellular fluorescence via NPQ. In Limnospira maxima (Arthrospira maxima), this protein is Orange carotenoid-binding protein.